Reading from the N-terminus, the 200-residue chain is MSFASASINLTHHFLIAMPGLEDAAFARSVVYLCEHSERGALGLIINKPTDITLKGLFDKVDLSLRREDLGREPVFQGGPVQTERGFVLHEPMPDEGRSATDGSAYASTMVIPGGLAMTTSKDVLEALSTGAGPRRVLITLGYSSWGGGQLESELAENAWLTVAADLSVIFDTPAPERYDRALSLLGLEVWMLSPSAGHA.

Belongs to the UPF0301 (AlgH) family.

The protein is UPF0301 protein Veis_1517 of Verminephrobacter eiseniae (strain EF01-2).